A 469-amino-acid polypeptide reads, in one-letter code: Serine hydroxymethyltransferase, cytosolic (469 aa).

Lys-248 bears the N6-(pyridoxal phosphate)lysine mark.

The protein belongs to the SHMT family. In terms of assembly, homotetramer. The cofactor is pyridoxal 5'-phosphate.

The protein localises to the cytoplasm. It carries out the reaction (6R)-5,10-methylene-5,6,7,8-tetrahydrofolate + glycine + H2O = (6S)-5,6,7,8-tetrahydrofolate + L-serine. Its pathway is one-carbon metabolism; tetrahydrofolate interconversion. Interconversion of serine and glycine. The sequence is that of Serine hydroxymethyltransferase, cytosolic (SHM2) from Eremothecium gossypii (strain ATCC 10895 / CBS 109.51 / FGSC 9923 / NRRL Y-1056) (Yeast).